We begin with the raw amino-acid sequence, 389 residues long: Chorismate synthase (389 aa).

Residues Arg41 and Arg47 each coordinate NADP(+). Residues 129–131 (RSS), 247–248 (NA), Gly291, 306–310 (KPIST), and Arg332 each bind FMN.

The protein belongs to the chorismate synthase family. Homotetramer. FMNH2 is required as a cofactor.

The catalysed reaction is 5-O-(1-carboxyvinyl)-3-phosphoshikimate = chorismate + phosphate. The protein operates within metabolic intermediate biosynthesis; chorismate biosynthesis; chorismate from D-erythrose 4-phosphate and phosphoenolpyruvate: step 7/7. Functionally, catalyzes the anti-1,4-elimination of the C-3 phosphate and the C-6 proR hydrogen from 5-enolpyruvylshikimate-3-phosphate (EPSP) to yield chorismate, which is the branch point compound that serves as the starting substrate for the three terminal pathways of aromatic amino acid biosynthesis. This reaction introduces a second double bond into the aromatic ring system. The chain is Chorismate synthase from Rubrobacter xylanophilus (strain DSM 9941 / JCM 11954 / NBRC 16129 / PRD-1).